The sequence spans 322 residues: Gluconeogenesis factor (322 aa).

Belongs to the gluconeogenesis factor family.

It is found in the cytoplasm. Its function is as follows. Required for morphogenesis under gluconeogenic growth conditions. This chain is Gluconeogenesis factor, found in Listeria monocytogenes serovar 1/2a (strain ATCC BAA-679 / EGD-e).